A 332-amino-acid chain; its full sequence is MYMKEKRDEILLKIIDLYIKSGQPVSSKQLISEYKLAVSSATIRNIMADLENEGFLEKTHTSSGRIPSISGYKFFAEHSKSKTNELLESKLKEIFSKRYLSIDVTLDEAAKAINEIIGLTLVTSSNVNTEVLKSIQLIELNNYSATIILVTSTGQVANKTIDLTNFQDIKLEDVRIAIRLFKERLINTSLINLREKALALKPILSKYIKNYETILQSFIGNVFEFENKNHVYGKSNIIKQEGIDRLHLTQILDLIENNSIWNMIESKVEEDETLKIDVRNSNISLISKKIFVNNTTKEISVIGSNRMDYISAKSAIALLESFIKPKFSKKNN.

The protein belongs to the HrcA family.

Functionally, negative regulator of class I heat shock genes (grpE-dnaK-dnaJ and groELS operons). Prevents heat-shock induction of these operons. This Mycoplasma mobile (strain ATCC 43663 / 163K / NCTC 11711) (Mesomycoplasma mobile) protein is Heat-inducible transcription repressor HrcA.